The primary structure comprises 210 residues: Phosphoenolpyruvate guanylyltransferase (210 aa).

Residues Thr-130, Gly-146, and Ser-149 each coordinate phosphoenolpyruvate.

It belongs to the CofC family.

The catalysed reaction is phosphoenolpyruvate + GTP + H(+) = enolpyruvoyl-2-diphospho-5'-guanosine + diphosphate. It functions in the pathway cofactor biosynthesis; coenzyme F420 biosynthesis. Functionally, guanylyltransferase that catalyzes the activation of phosphoenolpyruvate (PEP) as enolpyruvoyl-2-diphospho-5'-guanosine, via the condensation of PEP with GTP. It is involved in the biosynthesis of coenzyme F420, a hydride carrier cofactor. This Roseiflexus castenholzii (strain DSM 13941 / HLO8) protein is Phosphoenolpyruvate guanylyltransferase.